A 598-amino-acid polypeptide reads, in one-letter code: Aspartate--tRNA(Asp/Asn) ligase (598 aa).

Glu177 lines the L-aspartate pocket. The tract at residues 201–204 is aspartate; it reads QIFK. Residues Arg223 and His451 each coordinate L-aspartate. 223–225 provides a ligand contact to ATP; it reads RDE. Glu485 is a binding site for ATP. Residue Arg492 coordinates L-aspartate. Position 537 to 540 (537 to 540) interacts with ATP; the sequence is GVDR.

This sequence belongs to the class-II aminoacyl-tRNA synthetase family. Type 1 subfamily. As to quaternary structure, homodimer.

Its subcellular location is the cytoplasm. It catalyses the reaction tRNA(Asx) + L-aspartate + ATP = L-aspartyl-tRNA(Asx) + AMP + diphosphate. Functionally, aspartyl-tRNA synthetase with relaxed tRNA specificity since it is able to aspartylate not only its cognate tRNA(Asp) but also tRNA(Asn). Reaction proceeds in two steps: L-aspartate is first activated by ATP to form Asp-AMP and then transferred to the acceptor end of tRNA(Asp/Asn). The chain is Aspartate--tRNA(Asp/Asn) ligase from Anaplasma phagocytophilum (strain HZ).